Consider the following 394-residue polypeptide: Phosphatidylinositol 4-phosphate 5-kinase-like protein 1 (394 aa).

One can recognise a PIPK domain in the interval 36 to 393; sequence DKQSRLGLFE…RLCQWVEAHT (358 aa).

Heterodimerizes with other type I phosphatidylinositol 4-phosphate 5-kinase.

The protein localises to the cytoplasm. The protein resides in the membrane. The enzyme catalyses a 1,2-diacyl-sn-glycero-3-phospho-(1D-myo-inositol 4-phosphate) + ATP = a 1,2-diacyl-sn-glycero-3-phospho-(1D-myo-inositol-4,5-bisphosphate) + ADP + H(+). May act as a scaffold to localize and regulate type I PI(4)P 5-kinases to specific compartments within the cell, where they generate PI(4,5)P2 for actin nucleation, signaling and scaffold protein recruitment and conversion to PI(3,4,5)P3. In Homo sapiens (Human), this protein is Phosphatidylinositol 4-phosphate 5-kinase-like protein 1 (PIP5KL1).